An 855-amino-acid polypeptide reads, in one-letter code: DNA mismatch repair protein MutS (855 aa).

616–623 (GPNMGGKS) is an ATP binding site.

The protein belongs to the DNA mismatch repair MutS family.

Functionally, this protein is involved in the repair of mismatches in DNA. It is possible that it carries out the mismatch recognition step. This protein has a weak ATPase activity. This Salmonella schwarzengrund (strain CVM19633) protein is DNA mismatch repair protein MutS.